Reading from the N-terminus, the 82-residue chain is Short neurotoxin OKI-10 (82 aa).

The N-terminal stretch at 1–20 is a signal peptide; that stretch reads KTLLLTLVVVTIVCLDLGYT. Intrachain disulfides connect cysteine 23–cysteine 44, cysteine 37–cysteine 61, cysteine 63–cysteine 74, and cysteine 75–cysteine 80.

The protein belongs to the three-finger toxin family. Short-chain subfamily. Type I alpha-neurotoxin sub-subfamily. In terms of tissue distribution, expressed by the venom gland.

It is found in the secreted. Functionally, binds to muscle nicotinic acetylcholine receptor (nAChR) and inhibit acetylcholine from binding to the receptor, thereby impairing neuromuscular transmission. The sequence is that of Short neurotoxin OKI-10 from Laticauda laticaudata (Blue-ringed sea krait).